The following is a 397-amino-acid chain: MSLRVTRNMLANAENNVKTTLAGKRVVATKPGLRPRTALGDIGNKAEVKVPTKKELKPAVKAAKKAKPVDKLLEPLKVIEENVCPKPAQVEPSSPSPMETSGCLPDELCQAFSDVLIHVKDVDADDDGNPMLCSEYVKDIYAYLRSLEDAQAVRQNYLHGQEVTGNMRAILIDWLVQVQMKFRLLQETMFMTVGIIDRFLQEHPVPKNQLQLVGVTAMFLAAKYEEMYPPEIGDFTFVTDHTYTKAQIRDMEMKILRVLKFAIGRPLPLHFLRRASKIGEVTAEQHSLAKYLMELVMVDYDMVHFTPSQIAAASSCLSLKILNAGDWTPTLHHYMAYSEEDLVPVMQHMAKNIIKVNKGLTKHLTVKNKYASSKQMKISTIPQLRSDVVVEMARPLM.

The protein belongs to the cyclin family. Cyclin AB subfamily. Interacts with the cdc2 protein kinase to form a serine/threonine kinase holoenzyme complex also known as maturation promoting factor (MPF). The cyclin subunit imparts substrate specificity to the complex. When not in a complex with cdc2, interacts with spdya. Interacts with nap1l1. Interacts with nanos1.

The protein resides in the cytoplasm. Its subcellular location is the cytoskeleton. It is found in the microtubule organizing center. It localises to the centrosome. The protein localises to the nucleus. In terms of biological role, essential for the control of the cell cycle at the G2/M (mitosis) transition. The polypeptide is G2/mitotic-specific cyclin-B1 (ccnb1) (Xenopus laevis (African clawed frog)).